Reading from the N-terminus, the 261-residue chain is 1-(5-phosphoribosyl)-5-[(5-phosphoribosylamino)methylideneamino] imidazole-4-carboxamide isomerase (261 aa).

Residue Asp8 is the Proton acceptor of the active site. Asp130 serves as the catalytic Proton donor.

The protein belongs to the HisA/HisF family.

It is found in the cytoplasm. The enzyme catalyses 1-(5-phospho-beta-D-ribosyl)-5-[(5-phospho-beta-D-ribosylamino)methylideneamino]imidazole-4-carboxamide = 5-[(5-phospho-1-deoxy-D-ribulos-1-ylimino)methylamino]-1-(5-phospho-beta-D-ribosyl)imidazole-4-carboxamide. Its pathway is amino-acid biosynthesis; L-histidine biosynthesis; L-histidine from 5-phospho-alpha-D-ribose 1-diphosphate: step 4/9. The protein is 1-(5-phosphoribosyl)-5-[(5-phosphoribosylamino)methylideneamino] imidazole-4-carboxamide isomerase of Prosthecochloris aestuarii (strain DSM 271 / SK 413).